The chain runs to 125 residues: Small ribosomal subunit protein uS13 (125 aa).

Positions 93–125 (RRGLPVRGQRTKTNARTRKGPKRTVAGKKKAGR) are disordered.

Belongs to the universal ribosomal protein uS13 family. In terms of assembly, part of the 30S ribosomal subunit. Forms a loose heterodimer with protein S19. Forms two bridges to the 50S subunit in the 70S ribosome.

Functionally, located at the top of the head of the 30S subunit, it contacts several helices of the 16S rRNA. In the 70S ribosome it contacts the 23S rRNA (bridge B1a) and protein L5 of the 50S subunit (bridge B1b), connecting the 2 subunits; these bridges are implicated in subunit movement. Contacts the tRNAs in the A and P-sites. This Renibacterium salmoninarum (strain ATCC 33209 / DSM 20767 / JCM 11484 / NBRC 15589 / NCIMB 2235) protein is Small ribosomal subunit protein uS13.